Here is a 313-residue protein sequence, read N- to C-terminus: Mitochondrial uncoupling protein 5 (313 aa).

Solcar repeat units lie at residues 4 to 108, 117 to 208, and 217 to 307; these read KGFA…IKGE, MPLM…VKET, and DGLG…VKKL. Helical transmembrane passes span 6–26, 77–97, 123–143, 182–202, 223–243, and 280–300; these read FAEG…LDLI, MRAL…YSTT, IGAG…ADVA, RGSS…LASY, VSAS…VDVI, and YKGF…LFVT.

This sequence belongs to the mitochondrial carrier (TC 2.A.29) family. In terms of tissue distribution, expressed in roots, leaves, stems and flowers.

It is found in the mitochondrion inner membrane. Its function is as follows. PUMPS are mitochondrial transporter proteins that create proton leaks across the inner mitochondrial membrane, thus uncoupling oxidative phosphorylation. This leads to a decrease in the efficiency of oxidative phosphorylation and an increase in heat production. May be involved in protecting plant cells against oxidative stress damage. Recombinant PUMP5, reconstituted into liposomes, transports a wide range of dicarboxylic acids including malate, oxaloacetate and succinate as well as phosphate, sulfate and thiosulfate. However, it is unknown if these transports are of any biological significance in vivo. This Arabidopsis thaliana (Mouse-ear cress) protein is Mitochondrial uncoupling protein 5 (PUMP5).